Reading from the N-terminus, the 101-residue chain is NADH-quinone oxidoreductase subunit K (101 aa).

The next 3 helical transmembrane spans lie at 4 to 24 (LGHL…GIFL), 30 to 50 (IVLL…FIAF), and 62 to 82 (FVFF…AILV).

Belongs to the complex I subunit 4L family. NDH-1 is composed of 14 different subunits. Subunits NuoA, H, J, K, L, M, N constitute the membrane sector of the complex.

Its subcellular location is the cell inner membrane. The enzyme catalyses a quinone + NADH + 5 H(+)(in) = a quinol + NAD(+) + 4 H(+)(out). In terms of biological role, NDH-1 shuttles electrons from NADH, via FMN and iron-sulfur (Fe-S) centers, to quinones in the respiratory chain. The immediate electron acceptor for the enzyme in this species is believed to be ubiquinone. Couples the redox reaction to proton translocation (for every two electrons transferred, four hydrogen ions are translocated across the cytoplasmic membrane), and thus conserves the redox energy in a proton gradient. The polypeptide is NADH-quinone oxidoreductase subunit K (Xylella fastidiosa (strain Temecula1 / ATCC 700964)).